Reading from the N-terminus, the 235-residue chain is Cell division protein FtsQ (235 aa).

Over 1-6 the chain is Cytoplasmic; that stretch reads MERLTR. A helical transmembrane segment spans residues 7–25; that stretch reads WLLVMMAMLLAASGLVWFY. Residues 26-235 lie on the Periplasmic side of the membrane; sequence NSNHLPVKQV…DGLPEKESEE (210 aa). Positions 30 to 99 constitute a POTRA domain; that stretch reads LPVKQVSLKG…DTVEVVLTER (70 aa).

Belongs to the FtsQ/DivIB family. FtsQ subfamily. In terms of assembly, part of a complex composed of FtsB, FtsL and FtsQ.

It localises to the cell inner membrane. Essential cell division protein. May link together the upstream cell division proteins, which are predominantly cytoplasmic, with the downstream cell division proteins, which are predominantly periplasmic. May control correct divisome assembly. This Neisseria meningitidis serogroup B (strain ATCC BAA-335 / MC58) protein is Cell division protein FtsQ.